Reading from the N-terminus, the 645-residue chain is Pro-neuregulin-1, membrane-bound isoform (645 aa).

The propeptide occupies 1–19 (MSERKEGRGKGKGKKKDRG). Positions 1-52 (MSERKEGRGKGKGKKKDRGSRGKPAPAEGDPSPALPPRLKEMKSQESAAGSK) are disordered. At 20–247 (SRGKPAPAEG…MEAEELYQKR (228 aa)) the chain is on the extracellular side. One can recognise an Ig-like C2-type domain in the interval 37-128 (PRLKEMKSQE…GNDSASANIT (92 aa)). Cys57 and Cys112 form a disulfide bridge. Residues 139 to 164 (MSASTERPYVSSESPIRISVSTEGAN) show a composition bias toward polar residues. Residues 139–175 (MSASTERPYVSSESPIRISVSTEGANTSSSTSTSTTG) form a disordered region. Residues 165 to 175 (TSSSTSTSTTG) are compositionally biased toward low complexity. Residues 178–222 (HLIKCAEKEKTFCVNGGECFMVKDLSNPSRYLCKCPNEFTGDRCQ) enclose the EGF-like domain. 3 disulfide bridges follow: Cys182–Cys196, Cys190–Cys210, and Cys212–Cys221. A helical transmembrane segment spans residues 248–268 (VLTITGICIALLVVGIMCVVA). Topologically, residues 269 to 645 (YCKTKKQRQK…VIANQDPIAV (377 aa)) are cytoplasmic. The span at 340–355 (SHYTSTAHHSTTVTQT) shows a compositional bias: low complexity. 4 disordered regions span residues 340–364 (SHYT…SNGH), 380–406 (SVEN…PREC), 433–463 (MTTP…PVSS), and 531–593 (ETTQ…DTPF). Positions 392-402 (GPRGRLHGLGG) are enriched in gly residues. Basic residues predominate over residues 547–557 (TNSRRAKRTKP). The span at 568–579 (DSNPSSVSSNSE) shows a compositional bias: low complexity.

The protein belongs to the neuregulin family. In terms of assembly, the cytoplasmic domain interacts with the LIM domain region of LIMK1. Forms a ternary complex with ERBB3 and ITGAV:ITGB3 or ITGA6:ITGB4. Interacts with NRDC and BACE1. Post-translationally, proteolytic cleavage close to the plasma membrane on the external face leads to the release of the soluble growth factor form. In terms of processing, N- and O-glycosylated. Extensive glycosylation precedes the proteolytic cleavage.

It is found in the cell membrane. Its subcellular location is the secreted. In terms of biological role, direct ligand for ERBB3 and ERBB4 tyrosine kinase receptors. Concomitantly recruits ERBB1 and ERBB2 coreceptors, resulting in ligand-stimulated tyrosine phosphorylation and activation of the ERBB receptors. Perform diverse functions such as inducing growth and differentiation of epithelial, glial, neuronal, and skeletal muscle cells; inducing expression of acetylcholine receptor in synaptic vesicles during the formation of the neuromuscular junction; stimulating lobuloalveolar budding and milk production in the mammary gland and inducing differentiation of mammary tumor cells; stimulating Schwann cell proliferation; implication in the development of the myocardium such as trabeculation of the developing heart. Binds to ERBB4 and ERBB3. Acts as a ligand for integrins and binds (via EGF domain) to integrins ITGAV:ITGB3 or ITGA6:ITGB4. Its binding to integrins and subsequent ternary complex formation with integrins and ERRB3 are essential for NRG1-ERBB signaling. Induces the phosphorylation and activation of MAPK3/ERK1, MAPK1/ERK2 and AKT1, and ligand-dependent ERBB4 endocytosis is essential for the NRG1-mediated activation of these kinases in neurons. This Mus musculus (Mouse) protein is Pro-neuregulin-1, membrane-bound isoform.